We begin with the raw amino-acid sequence, 185 residues long: Ribose 1,5-bisphosphate phosphokinase PhnN (185 aa).

It belongs to the ribose 1,5-bisphosphokinase family.

The catalysed reaction is alpha-D-ribose 1,5-bisphosphate + ATP = 5-phospho-alpha-D-ribose 1-diphosphate + ADP. It functions in the pathway metabolic intermediate biosynthesis; 5-phospho-alpha-D-ribose 1-diphosphate biosynthesis; 5-phospho-alpha-D-ribose 1-diphosphate from D-ribose 5-phosphate (route II): step 3/3. Its function is as follows. Catalyzes the phosphorylation of ribose 1,5-bisphosphate to 5-phospho-D-ribosyl alpha-1-diphosphate (PRPP). This Escherichia coli (strain SMS-3-5 / SECEC) protein is Ribose 1,5-bisphosphate phosphokinase PhnN.